Here is a 263-residue protein sequence, read N- to C-terminus: Undecaprenyl-diphosphatase 2 (263 aa).

A run of 8 helical transmembrane segments spans residues 15–37 (GLTEFLPVSSTGHMILTGHLLGF), 42–62 (AKVFEVVIQLGSILAVVVIFW), 83–103 (LHIIIGMIPAGVLGVLFHSAI), 106–126 (VLFGPGPVVISLVAGGILMIV), 142–162 (ITYKQAFTIGMFQCLALWPGF), 183–203 (AEYTFILAVPMMVAASGLDLI), 216–236 (LFATGFITAFVVAMLAIVSFL), and 242–262 (VKLTPFAYYRFILAAVFYFFI).

The protein belongs to the UppP family.

The protein resides in the cell membrane. The catalysed reaction is di-trans,octa-cis-undecaprenyl diphosphate + H2O = di-trans,octa-cis-undecaprenyl phosphate + phosphate + H(+). In terms of biological role, catalyzes the dephosphorylation of undecaprenyl diphosphate (UPP). Confers resistance to bacitracin. The polypeptide is Undecaprenyl-diphosphatase 2 (Bacillus cereus (strain ATCC 10987 / NRS 248)).